The primary structure comprises 857 residues: Protein sip-5 (857 aa).

Disordered regions lie at residues 1–81 (MGNA…ARRL), 157–231 (GLPI…FKPT), 384–416 (SESS…APNV), 466–517 (FGRR…GNRR), 545–747 (KAEK…PMFN), and 763–857 (HAGK…QVTL). 2 stretches are compositionally biased toward basic and acidic residues: residues 7-16 (KESRGDDSGR) and 36-48 (ESSR…RHDL). Over residues 49 to 61 (TGLLGRAAGGSSS) the composition is skewed to low complexity. Over residues 62–81 (HADERHERKETKQEREARRL) the composition is skewed to basic and acidic residues. Composition is skewed to polar residues over residues 179-191 (ASPT…TNHL) and 199-208 (SLSTASEHST). 3 stretches are compositionally biased toward low complexity: residues 209–230 (SNAG…PFKP), 384–394 (SESSVNSGSLS), and 476–504 (SASA…TANT). The span at 545-572 (KAEKEEQKEAKKREKEREKAEKKAEKAA) shows a compositional bias: basic and acidic residues. 2 stretches are compositionally biased toward low complexity: residues 586 to 604 (SRSG…PGLS) and 621 to 645 (ASVA…ALAP). Residues 648 to 657 (STKDKGKAVD) show a composition bias toward basic and acidic residues. Over residues 688–697 (SSASSASSSA) the composition is skewed to low complexity. Residues 698–712 (VESNQGSYVPPSNLQ) are compositionally biased toward polar residues. The span at 783-799 (ETAKSGEGAGEHVEHVL) shows a compositional bias: basic and acidic residues. Composition is skewed to polar residues over residues 800 to 838 (DSQT…STAS) and 845 to 857 (NETT…QVTL).

This sequence belongs to the SIP5 family.

The protein localises to the cytoplasm. In terms of biological role, may negatively regulate the snf-1 kinase. The protein is Protein sip-5 (sip-5) of Neurospora crassa (strain ATCC 24698 / 74-OR23-1A / CBS 708.71 / DSM 1257 / FGSC 987).